The primary structure comprises 182 residues: NADH-quinone oxidoreductase subunit B 2 (182 aa).

[4Fe-4S] cluster-binding residues include cysteine 57, cysteine 58, cysteine 123, and cysteine 153.

Belongs to the complex I 20 kDa subunit family. In terms of assembly, NDH-1 is composed of 14 different subunits. Subunits NuoB, C, D, E, F, and G constitute the peripheral sector of the complex. Requires [4Fe-4S] cluster as cofactor.

The protein localises to the cell membrane. It catalyses the reaction a quinone + NADH + 5 H(+)(in) = a quinol + NAD(+) + 4 H(+)(out). NDH-1 shuttles electrons from NADH, via FMN and iron-sulfur (Fe-S) centers, to quinones in the respiratory chain. The immediate electron acceptor for the enzyme in this species is believed to be a menaquinone. Couples the redox reaction to proton translocation (for every two electrons transferred, four hydrogen ions are translocated across the cytoplasmic membrane), and thus conserves the redox energy in a proton gradient. This Symbiobacterium thermophilum (strain DSM 24528 / JCM 14929 / IAM 14863 / T) protein is NADH-quinone oxidoreductase subunit B 2.